The chain runs to 193 residues: Gas vesicle protein C (193 aa).

5 repeats span residues 19–51 (VAEL…LQAF), 52–84 (YKDL…LLAF), 85–117 (HKEL…LLAF), 118–150 (YQEV…LLAF), and 151–183 (HKEL…LLKF). The segment at 19–183 (VAELSLETRE…KEQKESLLKF (165 aa)) is 5 X 33 AA tandem repeats.

It belongs to the gas vesicle GvpC family.

The protein resides in the gas vesicle. In terms of biological role, confers stability, involved in shaping gas vesicles (GV), hollow, gas-filled proteinaceous nanostructures. During planktonic growth they allow positioning of the organism at a favorable depth for light or nutrient acquisition. The ratio of GvpA:GvpC is estimated to be 25:1. GvpC strengthens the GV wall, probably by connecting several GvpA proteins in the same and/or adjacent ribs. Removal of GvpC by SDS reduces the critical collapse pressure (CCP) of stored gas vesicles from 0.23 Mpa to 0.08 MPa. Removal of GvpC by urea reduces CCP of freshly isolated GVs from 0.550 MPa to 0.190 MPa; addition of recombinant GvpC restores CCP to 0.508 MPa. As the turgor pressure in this species is usually 0.35 MPa (plus the water column pressure in its growth environment), this protein is essential for GV formation. This Dolichospermum flosaquae (Anabaena flos-aquae) protein is Gas vesicle protein C.